The chain runs to 534 residues: Serine/threonine-protein kinase ppk15 (534 aa).

The segment at 1–40 (MDSDSPILPLSNNPPAARTHDHSQRNNHARHVSSSGTTLF) is disordered. S33, S56, and S60 each carry phosphoserine. The interval 85–104 (FSSEQNPRRPLTKPSEGVHN) is disordered. One can recognise a Protein kinase domain in the interval 130–458 (YLILDTLGHG…PDQAKNHPFI (329 aa)). ATP is bound by residues 136–144 (LGHGTFGQV) and K159. Catalysis depends on D257, which acts as the Proton acceptor. A Phosphotyrosine modification is found at Y291.

Belongs to the protein kinase superfamily. Ser/Thr protein kinase family.

It is found in the cytoplasm. The protein localises to the cytoskeleton. The protein resides in the microtubule organizing center. Its subcellular location is the spindle pole body. The enzyme catalyses L-seryl-[protein] + ATP = O-phospho-L-seryl-[protein] + ADP + H(+). It catalyses the reaction L-threonyl-[protein] + ATP = O-phospho-L-threonyl-[protein] + ADP + H(+). This Schizosaccharomyces pombe (strain 972 / ATCC 24843) (Fission yeast) protein is Serine/threonine-protein kinase ppk15 (ppk15).